Reading from the N-terminus, the 334-residue chain is Ferrochelatase (334 aa).

Positions 207 and 288 each coordinate Fe cation.

This sequence belongs to the ferrochelatase family.

It localises to the cytoplasm. It carries out the reaction heme b + 2 H(+) = protoporphyrin IX + Fe(2+). The protein operates within porphyrin-containing compound metabolism; protoheme biosynthesis; protoheme from protoporphyrin-IX: step 1/1. In terms of biological role, catalyzes the ferrous insertion into protoporphyrin IX. The polypeptide is Ferrochelatase (Helicobacter pylori (strain P12)).